Reading from the N-terminus, the 295-residue chain is Nucleotide-binding protein CMS1991 (295 aa).

19–26 (GMSGAGRS) is an ATP binding site. 70 to 73 (DVRG) is a binding site for GTP.

It belongs to the RapZ-like family.

In terms of biological role, displays ATPase and GTPase activities. This Clavibacter sepedonicus (Clavibacter michiganensis subsp. sepedonicus) protein is Nucleotide-binding protein CMS1991.